The primary structure comprises 366 residues: Phospho-N-acetylmuramoyl-pentapeptide-transferase (366 aa).

Helical transmembrane passes span 3 to 23 (QIFIAGAVAFLVSVFLTPVLI), 54 to 74 (GIAVLAGIVFGYLIAVLVGLV), 80 to 100 (PGVSGWLVLGLTLALGGLGFA), 120 to 140 (LVGQLVTAIVFGLLILQFPNA), 161 to 181 (IAIGPAIVGMILFLIFIYLVI), 197 to 217 (LASGVTAIVMGTYVLITFWQF), 238 to 258 (LSMLASAGLGACLGFLWWNAA), 262 to 282 (IFMGDTGSLALGGLVAGLSVT), 288 to 308 (LMILVGIIFVIEAASVVIQVV), and 341 to 361 (FWLLAALAAMSGFAVFYAEWL).

The protein belongs to the glycosyltransferase 4 family. MraY subfamily. It depends on Mg(2+) as a cofactor.

It localises to the cell membrane. The enzyme catalyses UDP-N-acetyl-alpha-D-muramoyl-L-alanyl-gamma-D-glutamyl-meso-2,6-diaminopimeloyl-D-alanyl-D-alanine + di-trans,octa-cis-undecaprenyl phosphate = di-trans,octa-cis-undecaprenyl diphospho-N-acetyl-alpha-D-muramoyl-L-alanyl-D-glutamyl-meso-2,6-diaminopimeloyl-D-alanyl-D-alanine + UMP. It functions in the pathway cell wall biogenesis; peptidoglycan biosynthesis. Its function is as follows. Catalyzes the initial step of the lipid cycle reactions in the biosynthesis of the cell wall peptidoglycan: transfers peptidoglycan precursor phospho-MurNAc-pentapeptide from UDP-MurNAc-pentapeptide onto the lipid carrier undecaprenyl phosphate, yielding undecaprenyl-pyrophosphoryl-MurNAc-pentapeptide, known as lipid I. This Corynebacterium jeikeium (strain K411) protein is Phospho-N-acetylmuramoyl-pentapeptide-transferase.